A 400-amino-acid chain; its full sequence is Enoyl-[acyl-carrier-protein] reductase [NADH] (400 aa).

NAD(+) is bound by residues 48–53 (GSSSGY), 74–75 (FE), 111–112 (DA), and 139–140 (LA). Tyr-225 is a substrate binding site. Tyr-235 functions as the Proton donor in the catalytic mechanism. Residues Lys-244 and 273 to 275 (VVT) each bind NAD(+).

It belongs to the TER reductase family. In terms of assembly, monomer.

The catalysed reaction is a 2,3-saturated acyl-[ACP] + NAD(+) = a (2E)-enoyl-[ACP] + NADH + H(+). The protein operates within lipid metabolism; fatty acid biosynthesis. Its function is as follows. Involved in the final reduction of the elongation cycle of fatty acid synthesis (FAS II). Catalyzes the reduction of a carbon-carbon double bond in an enoyl moiety that is covalently linked to an acyl carrier protein (ACP). This Shewanella woodyi (strain ATCC 51908 / MS32) protein is Enoyl-[acyl-carrier-protein] reductase [NADH].